The chain runs to 394 residues: Na(+)/H(+) antiporter NhaA (394 aa).

The next 11 helical transmembrane spans lie at 14–34, 59–79, 95–115, 125–145, 154–174, 179–199, 213–233, 254–274, 292–312, 328–348, and 363–383; these read AGGLILIIAAAIALLMANSAL, LLLWINDGLMAVFFLVVGLEV, VFPAIAALGGMLAPALIYLLF, GWAIPAATDIAFALGVMALLG, VFLLALAIIDDLGVIIIIALF, VSLQSLGIAAAAIALLAYMNW, LVLWVCILKSGVHATLAGVIV, GLHPWVAYLILPLFAFANAGV, IATGLFIGKPLGIFTFSWLAV, IFAVSVLCGIGFTMSIFIASL, and LGILLGSTTAAVVGYSLLRLV.

It belongs to the NhaA Na(+)/H(+) (TC 2.A.33) antiporter family.

The protein resides in the cell inner membrane. The enzyme catalyses Na(+)(in) + 2 H(+)(out) = Na(+)(out) + 2 H(+)(in). Its function is as follows. Na(+)/H(+) antiporter that extrudes sodium in exchange for external protons. This chain is Na(+)/H(+) antiporter NhaA, found in Yersinia pseudotuberculosis serotype O:1b (strain IP 31758).